The chain runs to 152 residues: Histone H2B.9 (152 aa).

2 stretches are compositionally biased toward basic and acidic residues: residues 1 to 16 and 34 to 52; these read MAPKAEKKPAAKKPAE and EKRLPAGKGEKGGAGEGKK. The segment at 1 to 59 is disordered; that stretch reads MAPKAEKKPAAKKPAEEEPAAEKAPAAGKKPKAEKRLPAGKGEKGGAGEGKKAGRKKGK. N6-acetyllysine occurs at positions 7 and 35. Lysine 148 participates in a covalent cross-link: Glycyl lysine isopeptide (Lys-Gly) (interchain with G-Cter in ubiquitin).

It belongs to the histone H2B family. In terms of assembly, the nucleosome is a histone octamer containing two molecules each of H2A, H2B, H3 and H4 assembled in one H3-H4 heterotetramer and two H2A-H2B heterodimers. The octamer wraps approximately 147 bp of DNA. In terms of processing, can be acetylated to form H2BK6ac and H2BK33ac. Monoubiquitinated by BRE1 to form H2BK143ub1 and deubiquitinated by UBP26. Required for heterochromatic histone H3 di- and trimethylation at H3K4me. May give a specific tag for epigenetic transcriptional activation.

It localises to the nucleus. It is found in the chromosome. Its function is as follows. Core component of nucleosome. Nucleosomes wrap and compact DNA into chromatin, limiting DNA accessibility to the cellular machineries which require DNA as a template. Histones thereby play a central role in transcription regulation, DNA repair, DNA replication and chromosomal stability. DNA accessibility is regulated via a complex set of post-translational modifications of histones, also called histone code, and nucleosome remodeling. In Oryza sativa subsp. indica (Rice), this protein is Histone H2B.9 (H2B.9).